A 524-amino-acid polypeptide reads, in one-letter code: 2-isopropylmalate synthase (524 aa).

One can recognise a Pyruvate carboxyltransferase domain in the interval 5–267 (VIIFDTTLRD…HTNINHQEIF (263 aa)). Positions 14, 202, 204, and 238 each coordinate Mn(2+). A regulatory domain region spans residues 392–524 (SLDYFSVQSG…SKHQNNQETV (133 aa)).

It belongs to the alpha-IPM synthase/homocitrate synthase family. LeuA type 1 subfamily. As to quaternary structure, homodimer. It depends on Mn(2+) as a cofactor.

It localises to the cytoplasm. It carries out the reaction 3-methyl-2-oxobutanoate + acetyl-CoA + H2O = (2S)-2-isopropylmalate + CoA + H(+). Its pathway is amino-acid biosynthesis; L-leucine biosynthesis; L-leucine from 3-methyl-2-oxobutanoate: step 1/4. Its function is as follows. Catalyzes the condensation of the acetyl group of acetyl-CoA with 3-methyl-2-oxobutanoate (2-ketoisovalerate) to form 3-carboxy-3-hydroxy-4-methylpentanoate (2-isopropylmalate). In Serratia proteamaculans (strain 568), this protein is 2-isopropylmalate synthase.